Consider the following 551-residue polypeptide: DNA double-strand break repair helicase HerA (551 aa).

ATP is bound by residues Arg152, 161 to 166 (GAGKSN), and 507 to 508 (RI).

Belongs to the HerA family. In terms of assembly, homohexamer. Interacts with NurA.

It carries out the reaction Couples ATP hydrolysis with the unwinding of duplex DNA at the replication fork by translocating in the 5'-3' direction. This creates two antiparallel DNA single strands (ssDNA). The leading ssDNA polymer is the template for DNA polymerase III holoenzyme which synthesizes a continuous strand.. The catalysed reaction is ATP + H2O = ADP + phosphate + H(+). The enzyme catalyses Couples ATP hydrolysis with the unwinding of duplex DNA by translocating in the 3'-5' direction.. Helicase activity is stimulated in the presence of NurA. Functionally, involved in DNA double-strand break (DSB) repair. Probably acts with NurA to stimulate resection of the 5' strand and produce the long 3' single-strand that is required for RadA loading. Has DNA-dependent ATPase activity and DNA helicase activity. The polypeptide is DNA double-strand break repair helicase HerA (Pyrococcus furiosus (strain ATCC 43587 / DSM 3638 / JCM 8422 / Vc1)).